Reading from the N-terminus, the 128-residue chain is Gastrotropin (128 aa).

At Ala-2 the chain carries N-acetylalanine.

This sequence belongs to the calycin superfamily. Fatty-acid binding protein (FABP) family.

The protein resides in the cytoplasm. It is found in the membrane. Its function is as follows. Binds to bile acids and is involved in enterohepatic bile acid metabolism. Required for efficient apical to basolateral transport of conjugated bile acids in ileal enterocytes. Stimulates gastric acid and pepsinogen secretion. The polypeptide is Gastrotropin (FABP6) (Bos taurus (Bovine)).